A 281-amino-acid polypeptide reads, in one-letter code: MAALKFTKMEGIGNDYIYIDSTQANIRLTPEQIQKISNRNFGIGSDGVIFIRNSKQGDFMMDMYNSDGSSSEMCGNGIRCVAKYIYDHGLTNSKNPKIETGAGVLEVDLKIGSGNKVDFVSVNMGKPILVPSKIPVNWKDEEAIIDQTFEIAGKNLKFTAVSMGNPHCVIFVDDCDQFPVTGIGPLIERHPIFPKRINVEFVTVRGKDHFYQRTWERGAGETLACGTGACAVTVAGNLTGKSGKEVKIDLRGGTLRIQWQESGNVLMTGPAKEIFSGEIEV.

Residues asparagine 14 and asparagine 65 each coordinate substrate. Cysteine 74 (proton donor) is an active-site residue. Substrate-binding positions include 75–76 (GN), asparagine 165, asparagine 198, and 216–217 (ER). Cysteine 225 acts as the Proton acceptor in catalysis. 226–227 (GT) serves as a coordination point for substrate.

Belongs to the diaminopimelate epimerase family. Homodimer.

It is found in the cytoplasm. It carries out the reaction (2S,6S)-2,6-diaminopimelate = meso-2,6-diaminopimelate. It participates in amino-acid biosynthesis; L-lysine biosynthesis via DAP pathway; DL-2,6-diaminopimelate from LL-2,6-diaminopimelate: step 1/1. In terms of biological role, catalyzes the stereoinversion of LL-2,6-diaminopimelate (L,L-DAP) to meso-diaminopimelate (meso-DAP), a precursor of L-lysine and an essential component of the bacterial peptidoglycan. This is Diaminopimelate epimerase from Leptospira borgpetersenii serovar Hardjo-bovis (strain JB197).